The chain runs to 222 residues: GTP cyclohydrolase 1 (222 aa).

Zn(2+) is bound by residues Cys111, His114, and Cys182.

It belongs to the GTP cyclohydrolase I family. As to quaternary structure, homomer.

It catalyses the reaction GTP + H2O = 7,8-dihydroneopterin 3'-triphosphate + formate + H(+). The protein operates within cofactor biosynthesis; 7,8-dihydroneopterin triphosphate biosynthesis; 7,8-dihydroneopterin triphosphate from GTP: step 1/1. This chain is GTP cyclohydrolase 1, found in Salmonella gallinarum (strain 287/91 / NCTC 13346).